We begin with the raw amino-acid sequence, 352 residues long: Histidine biosynthesis bifunctional protein HisB (352 aa).

The histidinol-phosphatase stretch occupies residues 1-163; sequence MKKILFIDRD…MVASAIINDA (163 aa). The active-site Nucleophile is D8. Residues D8 and D10 each coordinate Mg(2+). D10 (proton donor) is an active-site residue. 4 residues coordinate Zn(2+): C91, H93, C99, and C101. Residue D128 coordinates Mg(2+). The tract at residues 164–352 is imidazoleglycerol-phosphate dehydratase; the sequence is RKASVQRKTK…NYLPSTKGVL (189 aa).

This sequence in the N-terminal section; belongs to the histidinol-phosphatase family. It in the C-terminal section; belongs to the imidazoleglycerol-phosphate dehydratase family. Mg(2+) is required as a cofactor. Zn(2+) serves as cofactor.

Its subcellular location is the cytoplasm. It catalyses the reaction D-erythro-1-(imidazol-4-yl)glycerol 3-phosphate = 3-(imidazol-4-yl)-2-oxopropyl phosphate + H2O. The enzyme catalyses L-histidinol phosphate + H2O = L-histidinol + phosphate. The protein operates within amino-acid biosynthesis; L-histidine biosynthesis; L-histidine from 5-phospho-alpha-D-ribose 1-diphosphate: step 6/9. Its pathway is amino-acid biosynthesis; L-histidine biosynthesis; L-histidine from 5-phospho-alpha-D-ribose 1-diphosphate: step 8/9. The polypeptide is Histidine biosynthesis bifunctional protein HisB (Legionella pneumophila (strain Lens)).